Here is an 87-residue protein sequence, read N- to C-terminus: Small ribosomal subunit protein bS20 (87 aa).

The segment covering 1 to 15 has biased composition (basic residues); sequence MANHKSAAKRARQSI. The segment at 1-29 is disordered; that stretch reads MANHKSAAKRARQSIRKTAVNNARKSTVK. Over residues 19 to 29 the composition is skewed to polar residues; sequence AVNNARKSTVK.

This sequence belongs to the bacterial ribosomal protein bS20 family.

Functionally, binds directly to 16S ribosomal RNA. This chain is Small ribosomal subunit protein bS20, found in Bdellovibrio bacteriovorus (strain ATCC 15356 / DSM 50701 / NCIMB 9529 / HD100).